Consider the following 516-residue polypeptide: Putative sel1-like repeat-containing protein R850 (516 aa).

Sel1-like repeat units lie at residues 103 to 138 (ALTYNNLGFIYHNDIFKKNKVIKVISHYCKAVNMNS) and 230 to 265 (SISQYSIGTKYLGGDVTNRKYQKGIIYLKNSAKQGD).

In Acanthamoeba polyphaga (Amoeba), this protein is Putative sel1-like repeat-containing protein R850.